We begin with the raw amino-acid sequence, 171 residues long: Serine acetyltransferase (171 aa).

It belongs to the transferase hexapeptide repeat family.

The protein resides in the cytoplasm. It carries out the reaction L-serine + acetyl-CoA = O-acetyl-L-serine + CoA. It participates in amino-acid biosynthesis; L-cysteine biosynthesis; L-cysteine from L-serine: step 1/2. This chain is Serine acetyltransferase (cysE), found in Helicobacter pylori (strain ATCC 700392 / 26695) (Campylobacter pylori).